The primary structure comprises 788 residues: Histidine--tRNA ligase, cytoplasmic (788 aa).

The segment at Pro-252–Leu-286 is disordered.

It belongs to the class-II aminoacyl-tRNA synthetase family. As to quaternary structure, homodimer.

It catalyses the reaction tRNA(His) + L-histidine + ATP = L-histidyl-tRNA(His) + AMP + diphosphate + H(+). This Oryza sativa subsp. japonica (Rice) protein is Histidine--tRNA ligase, cytoplasmic.